The following is a 455-amino-acid chain: Bifunctional protein GlmU (455 aa).

The pyrophosphorylase stretch occupies residues 1-226 (MSLDIVILAA…AMEVQGANDR (226 aa)). UDP-N-acetyl-alpha-D-glucosamine is bound by residues 8 to 11 (LAAG), Lys-22, Gln-73, 78 to 79 (GT), 99 to 101 (YGD), Gly-136, Glu-151, Asn-166, and Asn-224. Position 101 (Asp-101) interacts with Mg(2+). Residue Asn-224 coordinates Mg(2+). The interval 227-247 (RQLSELERHYQLREGRRLMAQ) is linker. The interval 248 to 455 (GVTLRDPARF…WKRPEKIKKS (208 aa)) is N-acetyltransferase. UDP-N-acetyl-alpha-D-glucosamine is bound by residues Arg-330 and Lys-348. The active-site Proton acceptor is the His-360. UDP-N-acetyl-alpha-D-glucosamine contacts are provided by Tyr-363 and Asn-374. Acetyl-CoA contacts are provided by residues Ala-377, 383 to 384 (NY), Ser-402, Ala-420, and Arg-437.

In the N-terminal section; belongs to the N-acetylglucosamine-1-phosphate uridyltransferase family. It in the C-terminal section; belongs to the transferase hexapeptide repeat family. Homotrimer. Requires Mg(2+) as cofactor.

It localises to the cytoplasm. The enzyme catalyses alpha-D-glucosamine 1-phosphate + acetyl-CoA = N-acetyl-alpha-D-glucosamine 1-phosphate + CoA + H(+). It catalyses the reaction N-acetyl-alpha-D-glucosamine 1-phosphate + UTP + H(+) = UDP-N-acetyl-alpha-D-glucosamine + diphosphate. It participates in nucleotide-sugar biosynthesis; UDP-N-acetyl-alpha-D-glucosamine biosynthesis; N-acetyl-alpha-D-glucosamine 1-phosphate from alpha-D-glucosamine 6-phosphate (route II): step 2/2. The protein operates within nucleotide-sugar biosynthesis; UDP-N-acetyl-alpha-D-glucosamine biosynthesis; UDP-N-acetyl-alpha-D-glucosamine from N-acetyl-alpha-D-glucosamine 1-phosphate: step 1/1. It functions in the pathway bacterial outer membrane biogenesis; LPS lipid A biosynthesis. Catalyzes the last two sequential reactions in the de novo biosynthetic pathway for UDP-N-acetylglucosamine (UDP-GlcNAc). The C-terminal domain catalyzes the transfer of acetyl group from acetyl coenzyme A to glucosamine-1-phosphate (GlcN-1-P) to produce N-acetylglucosamine-1-phosphate (GlcNAc-1-P), which is converted into UDP-GlcNAc by the transfer of uridine 5-monophosphate (from uridine 5-triphosphate), a reaction catalyzed by the N-terminal domain. This chain is Bifunctional protein GlmU, found in Pseudomonas putida (strain ATCC 47054 / DSM 6125 / CFBP 8728 / NCIMB 11950 / KT2440).